The primary structure comprises 718 residues: Exostosin-2 (718 aa).

At 1–25 (MCASVKYNIRGPALIPRMKTKHRIY) the chain is on the cytoplasmic side. A helical; Signal-anchor for type II membrane protein membrane pass occupies residues 26–46 (YITLFSIVLLGLIATGMFQFW). Over 47–718 (PHSIESSGDW…LKSFPNIGSL (672 aa)) the chain is Lumenal. Intrachain disulfides connect C85/C90, C96/C151, C286/C300, and C318/C339. N288 is a glycosylation site (N-linked (GlcNAc...) asparagine). UDP-binding residues include L461, R465, N490, and N517. Positions 465, 490, 517, 522, 538, 539, and 540 each coordinate UDP-N-acetyl-alpha-D-glucosamine. 2 residues coordinate UDP: D538 and D539. D540 is a Mn(2+) binding site. Y582 and S584 together coordinate a protein. A disulfide bridge links C626 with C676. Residues E627 and D628 each coordinate UDP-N-acetyl-alpha-D-glucosamine. An N-linked (GlcNAc...) asparagine glycan is attached at N637. Residues K651 and K653 each contribute to the a protein site. R673 contacts UDP-N-acetyl-alpha-D-glucosamine.

It belongs to the glycosyltransferase 47 family. Part of the heparan sulfate polymerase, a dimeric complex composed of EXT1 and EXT2. Could also form homooligomeric complexes. Interacts with NDST1. Interacts with GALNT5. Requires Mn(2+) as cofactor. A soluble form is generated by proteolytic processing. Post-translationally, N-glycosylated at Asn-637.

The protein localises to the golgi apparatus membrane. The protein resides in the golgi apparatus. It is found in the cis-Golgi network membrane. Its subcellular location is the endoplasmic reticulum membrane. It localises to the secreted. It carries out the reaction 3-O-{[(1-&gt;4)-beta-D-GlcA-(1-&gt;4)-alpha-D-GlcNAc](n)-(1-&gt;4)-beta-D-GlcA-(1-&gt;3)-beta-D-Gal-(1-&gt;3)-beta-D-Gal-(1-&gt;4)-beta-D-Xyl}-L-seryl-[protein] + UDP-N-acetyl-alpha-D-glucosamine = 3-O-{alpha-D-GlcNAc-[(1-&gt;4)-beta-D-GlcA-(1-&gt;4)-alpha-D-GlcNAc](n)-(1-&gt;4)-beta-D-GlcA-(1-&gt;3)-beta-D-Gal-(1-&gt;3)-beta-D-Gal-(1-&gt;4)-beta-D-Xyl}-L-seryl-[protein] + UDP + H(+). Its pathway is protein modification; protein glycosylation. Glycosyltransferase forming with EXT1 the heterodimeric heparan sulfate polymerase which catalyzes the elongation of the heparan sulfate glycan backbone. Glycan backbone extension consists in the alternating transfer of (1-&gt;4)-beta-D-GlcA and (1-&gt;4)-alpha-D-GlcNAc residues from their respective UDP-sugar donors. Both EXT1 and EXT2 are required for the full activity of the polymerase since EXT1 bears the N-acetylglucosaminyl-proteoglycan 4-beta-glucuronosyltransferase activity within the complex while EXT2 carries the glucuronosyl-N-acetylglucosaminyl-proteoglycan 4-alpha-N-acetylglucosaminyltransferase activity. Heparan sulfate proteoglycans are ubiquitous components of the extracellular matrix and play an important role in tissue homeostasis and signaling. The protein is Exostosin-2 of Bos taurus (Bovine).